A 273-amino-acid chain; its full sequence is Large ribosomal subunit protein uL2cz/uL2cy (273 aa).

Disordered regions lie at residues 1-24 and 224-254; these read MAIHLYKTSTPSTRKGAVDSQAKS and NPVDHPHGGGEGRAPIGRKKPTTPWGYPALG.

The protein belongs to the universal ribosomal protein uL2 family. In terms of assembly, part of the 50S ribosomal subunit.

It localises to the plastid. Its subcellular location is the chloroplast. The polypeptide is Large ribosomal subunit protein uL2cz/uL2cy (rpl2-A) (Nymphaea alba (White water-lily)).